The sequence spans 1010 residues: Plasma membrane ATPase 2 (1010 aa).

The span at 1-14 shows a compositional bias: basic and acidic residues; sequence MQRNNGEGRPEGMH. 2 disordered regions span residues 1 to 126 and 139 to 165; these read MQRN…EDED and QDQE…PEEL. Topologically, residues 1-201 are cytoplasmic; the sequence is MQRNNGEGRP…KEEKTNNIKK (201 aa). A compositionally biased stretch (polar residues) spans 25-34; the sequence is FKNNASPQDD. A compositionally biased stretch (acidic residues) spans 42–52; it reads YEEGGVEDSAV. The segment covering 68–106 has biased composition (polar residues); the sequence is APNTHAQQANLQSGNTSITHETQSTSRGQEATTSPSLSA. The span at 140 to 151 shows a compositional bias: acidic residues; that stretch reads DQEEEQVEEEES. The chain crosses the membrane as a helical span at residues 202 to 222; the sequence is FLSFFVGPIQFVMELAAALAA. Topologically, residues 223-226 are extracellular; it reads GLRD. Residues 227-246 traverse the membrane as a helical segment; it reads WVDFGVICALLLLNATVGFV. At 247 to 377 the chain is on the cytoplasmic side; the sequence is QEYQAGSIVD…SQGHFTEVLN (131 aa). A helical membrane pass occupies residues 378–399; the sequence is GIGTILLVLVILTLLCIYTAAF. The Extracellular segment spans residues 400 to 410; it reads YRSVRLAALLE. A helical transmembrane segment spans residues 411–433; it reads YTLAITIIGVPVGLPAVVTTTMA. The Cytoplasmic segment spans residues 434–805; sequence VGAAYLAKKK…LIIRNQLLNL (372 aa). Catalysis depends on Asp-464, which acts as the 4-aspartylphosphate intermediate. Mg(2+) contacts are provided by Asp-720 and Asp-724. The chain crosses the membrane as a helical span at residues 806–824; the sequence is ELIVFIAIFADVATLAIAY. Residues 825-840 lie on the Extracellular side of the membrane; the sequence is DNAPYAMKPVKWNLPR. A helical membrane pass occupies residues 841-860; it reads LWGLATIVGILLAIGTWIVN. Residues 861–912 are Cytoplasmic-facing; that stretch reads TTMIAQGQNRGIVQNFGVQDEVLFLQISLTENWLIFITRCSGPFWSSFPSWQ. A helical membrane pass occupies residues 913 to 933; it reads LSGAVLVVDILATLFCIFGWF. Over 934–946 the chain is Extracellular; that stretch reads KGGHQTSIVAVIR. Residues 947 to 963 form a helical membrane-spanning segment; sequence IWMYSFGIFCLIAGVYY. The Cytoplasmic segment spans residues 964-1010; the sequence is ILSESSSFDRWMHGKHKERGTTRKLEDFVMQLQRTSTHHEAEGKVTS.

The protein belongs to the cation transport ATPase (P-type) (TC 3.A.3) family. Type IIIA subfamily. Post-translationally, in addition to transient phosphorylation of the active site Asp residue, this protein, but not the product of the pma1 locus, is phosphorylated efficiently in isolated plasma membrane.

The protein resides in the cell membrane. It carries out the reaction ATP + H2O + H(+)(in) = ADP + phosphate + 2 H(+)(out). In terms of biological role, the plasma membrane ATPase of plants and fungi is a hydrogen ion pump. The proton gradient it generates drives the active transport of nutrients by H(+)-symport. The resulting external acidification and/or internal alkinization may mediate growth responses. In Schizosaccharomyces pombe (strain 972 / ATCC 24843) (Fission yeast), this protein is Plasma membrane ATPase 2 (pma2).